We begin with the raw amino-acid sequence, 443 residues long: ATP-dependent protease ATPase subunit HslU (443 aa).

ATP contacts are provided by residues isoleucine 18, 60 to 65 (GVGKTE), aspartate 256, glutamate 321, and arginine 393.

It belongs to the ClpX chaperone family. HslU subfamily. As to quaternary structure, a double ring-shaped homohexamer of HslV is capped on each side by a ring-shaped HslU homohexamer. The assembly of the HslU/HslV complex is dependent on binding of ATP.

It localises to the cytoplasm. ATPase subunit of a proteasome-like degradation complex; this subunit has chaperone activity. The binding of ATP and its subsequent hydrolysis by HslU are essential for unfolding of protein substrates subsequently hydrolyzed by HslV. HslU recognizes the N-terminal part of its protein substrates and unfolds these before they are guided to HslV for hydrolysis. This Wigglesworthia glossinidia brevipalpis protein is ATP-dependent protease ATPase subunit HslU.